Reading from the N-terminus, the 357-residue chain is Phospho-N-acetylmuramoyl-pentapeptide-transferase (357 aa).

The next 10 membrane-spanning stretches (helical) occupy residues 23 to 43 (AIFS…YFIY), 70 to 90 (TMGG…YCNL), 91 to 111 (SNIY…IGFI), 127 to 147 (LKWK…MIKI), 171 to 191 (YLYV…VNLT), 196 to 216 (GLAI…SLFS), 236 to 256 (LAIL…FNSY), 260 to 280 (VFMG…IAIL), 286 to 306 (LLII…LQII), and 334 to 354 (LIIV…LISL).

It belongs to the glycosyltransferase 4 family. MraY subfamily. Mg(2+) is required as a cofactor.

Its subcellular location is the cell inner membrane. It carries out the reaction UDP-N-acetyl-alpha-D-muramoyl-L-alanyl-gamma-D-glutamyl-meso-2,6-diaminopimeloyl-D-alanyl-D-alanine + di-trans,octa-cis-undecaprenyl phosphate = di-trans,octa-cis-undecaprenyl diphospho-N-acetyl-alpha-D-muramoyl-L-alanyl-D-glutamyl-meso-2,6-diaminopimeloyl-D-alanyl-D-alanine + UMP. It functions in the pathway cell wall biogenesis; peptidoglycan biosynthesis. Functionally, catalyzes the initial step of the lipid cycle reactions in the biosynthesis of the cell wall peptidoglycan: transfers peptidoglycan precursor phospho-MurNAc-pentapeptide from UDP-MurNAc-pentapeptide onto the lipid carrier undecaprenyl phosphate, yielding undecaprenyl-pyrophosphoryl-MurNAc-pentapeptide, known as lipid I. The sequence is that of Phospho-N-acetylmuramoyl-pentapeptide-transferase from Buchnera aphidicola subsp. Acyrthosiphon pisum (strain Tuc7).